A 109-amino-acid chain; its full sequence is Large ribosomal subunit protein uL24 (109 aa).

The protein belongs to the universal ribosomal protein uL24 family. Part of the 50S ribosomal subunit.

Its function is as follows. One of two assembly initiator proteins, it binds directly to the 5'-end of the 23S rRNA, where it nucleates assembly of the 50S subunit. One of the proteins that surrounds the polypeptide exit tunnel on the outside of the subunit. This is Large ribosomal subunit protein uL24 from Desulforapulum autotrophicum (strain ATCC 43914 / DSM 3382 / VKM B-1955 / HRM2) (Desulfobacterium autotrophicum).